Here is a 401-residue protein sequence, read N- to C-terminus: 8-amino-7-oxononanoate synthase (401 aa).

A substrate-binding site is contributed by R24. Residue G111 to F112 participates in pyridoxal 5'-phosphate binding. H137 is a substrate binding site. 3 residues coordinate pyridoxal 5'-phosphate: S183, H211, and T240. N6-(pyridoxal phosphate)lysine is present on K243. Substrate is bound at residue T357.

The protein belongs to the class-II pyridoxal-phosphate-dependent aminotransferase family. BioF subfamily. As to quaternary structure, homodimer. Pyridoxal 5'-phosphate is required as a cofactor.

The enzyme catalyses 6-carboxyhexanoyl-[ACP] + L-alanine + H(+) = (8S)-8-amino-7-oxononanoate + holo-[ACP] + CO2. Its pathway is cofactor biosynthesis; biotin biosynthesis. Its function is as follows. Catalyzes the decarboxylative condensation of pimeloyl-[acyl-carrier protein] and L-alanine to produce 8-amino-7-oxononanoate (AON), [acyl-carrier protein], and carbon dioxide. The sequence is that of 8-amino-7-oxononanoate synthase from Xanthomonas euvesicatoria pv. vesicatoria (strain 85-10) (Xanthomonas campestris pv. vesicatoria).